The chain runs to 121 residues: Small ribosomal subunit protein uS13 (121 aa).

Residues 94 to 121 (GLPVRGQNTKNNARTRKGPRRTVANKKK) form a disordered region. The segment covering 106–121 (ARTRKGPRRTVANKKK) has biased composition (basic residues).

The protein belongs to the universal ribosomal protein uS13 family. In terms of assembly, part of the 30S ribosomal subunit. Forms a loose heterodimer with protein S19. Forms two bridges to the 50S subunit in the 70S ribosome.

Functionally, located at the top of the head of the 30S subunit, it contacts several helices of the 16S rRNA. In the 70S ribosome it contacts the 23S rRNA (bridge B1a) and protein L5 of the 50S subunit (bridge B1b), connecting the 2 subunits; these bridges are implicated in subunit movement. Contacts the tRNAs in the A and P-sites. The chain is Small ribosomal subunit protein uS13 from Geobacillus sp. (strain WCH70).